A 457-amino-acid chain; its full sequence is Siroheme synthase (457 aa).

The tract at residues 1-204 (MDHLPIFCQL…ADEKAVNATT (204 aa)) is precorrin-2 dehydrogenase /sirohydrochlorin ferrochelatase. Residues 22 to 23 (DV) and 43 to 44 (LN) each bind NAD(+). Ser128 is subject to Phosphoserine. Residues 216-457 (GEVVLVGAGP…RDKLNWFSNH (242 aa)) are uroporphyrinogen-III C-methyltransferase. Pro225 is an S-adenosyl-L-methionine binding site. The active-site Proton acceptor is Asp248. Lys270 acts as the Proton donor in catalysis. S-adenosyl-L-methionine is bound by residues 301 to 303 (GGD), Ile306, 331 to 332 (TA), Met382, and Gly411.

It in the N-terminal section; belongs to the precorrin-2 dehydrogenase / sirohydrochlorin ferrochelatase family. The protein in the C-terminal section; belongs to the precorrin methyltransferase family.

It carries out the reaction uroporphyrinogen III + 2 S-adenosyl-L-methionine = precorrin-2 + 2 S-adenosyl-L-homocysteine + H(+). The catalysed reaction is precorrin-2 + NAD(+) = sirohydrochlorin + NADH + 2 H(+). The enzyme catalyses siroheme + 2 H(+) = sirohydrochlorin + Fe(2+). It functions in the pathway cofactor biosynthesis; adenosylcobalamin biosynthesis; precorrin-2 from uroporphyrinogen III: step 1/1. Its pathway is cofactor biosynthesis; adenosylcobalamin biosynthesis; sirohydrochlorin from precorrin-2: step 1/1. It participates in porphyrin-containing compound metabolism; siroheme biosynthesis; precorrin-2 from uroporphyrinogen III: step 1/1. The protein operates within porphyrin-containing compound metabolism; siroheme biosynthesis; siroheme from sirohydrochlorin: step 1/1. It functions in the pathway porphyrin-containing compound metabolism; siroheme biosynthesis; sirohydrochlorin from precorrin-2: step 1/1. Multifunctional enzyme that catalyzes the SAM-dependent methylations of uroporphyrinogen III at position C-2 and C-7 to form precorrin-2 via precorrin-1. Then it catalyzes the NAD-dependent ring dehydrogenation of precorrin-2 to yield sirohydrochlorin. Finally, it catalyzes the ferrochelation of sirohydrochlorin to yield siroheme. The protein is Siroheme synthase of Salmonella paratyphi A (strain ATCC 9150 / SARB42).